Consider the following 886-residue polypeptide: General transcription factor 3C polypeptide 3 (886 aa).

Residues 1–121 (MSGFSPELID…TPEQPTAGDV (121 aa)) are disordered. Serine 2 is subject to N-acetylserine. Residues 12–44 (LEGKISFEEFERRREERKTREKKSLQEKGKLSA) are compositionally biased toward basic and acidic residues. Serine 43 is modified (phosphoserine). Residues 53-63 (VPSSSGINSTK) show a composition bias toward polar residues. The span at 92-113 (ENEDDEEEEEEEEEEEEEEETP) shows a compositional bias: acidic residues. TPR repeat units follow at residues 149 to 182 (LRGLMGEANIRFARGEREEAILMCMEIIRQAPLA), 183 to 216 (YEPFSTLAMIYEDQGDMEKSLQFELIAAHLNPSD), 217 to 250 (TEEWVRLAEMSLEQDNIKQAIFCYTKALKYEPTN), 252 to 284 (RYLWERSSLYEQMGDHKMAMDGYRRILNLLSPS), 290 to 323 (MQLARDMAKSYYEANDVTSAINIIDEAFSKHQGL), 326 to 361 (MEDVNIAAELYISNKQYDKALEIITDFSGIVLEKKT), 421 to 454 (GDLYLDVAEAFLDVGEYNSALPLLSALVCSERYN), 456 to 489 (AVVWLRHAECLKALGYMERAAESYGKVVDLAPLH), 491 to 523 (DARISLSTLQQQLGQPEKALEALEPMYDPDTLA), 733 to 766 (HALCVLNGHNAFVSGSFKHALGQYVQAFRTHPDE), and 811 to 844 (QESFYNLGRGLHQLGLIHLAIHYYQKALELPPLV). Serine 282 is subject to Phosphoserine.

Part of the TFIIIC subcomplex TFIIIC2, consisting of six subunits, GTF3C1, GTF3C2, GTF3C3, GTF3C4, GTF3C5 and GTF3C6. Interacts with BRF1 and TBP.

The protein resides in the nucleus. Its function is as follows. Involved in RNA polymerase III-mediated transcription. Integral, tightly associated component of the DNA-binding TFIIIC2 subcomplex that directly binds tRNA and virus-associated RNA promoters. The polypeptide is General transcription factor 3C polypeptide 3 (GTF3C3) (Homo sapiens (Human)).